The sequence spans 112 residues: ATP synthase subunit c (112 aa).

The next 2 membrane-spanning stretches (helical) occupy residues 36 to 56 and 81 to 101; these read FSVL…AIGM and MFIA…IALI.

The protein belongs to the ATPase C chain family. F-type ATPases have 2 components, F(1) - the catalytic core - and F(0) - the membrane proton channel. F(1) has five subunits: alpha(3), beta(3), gamma(1), delta(1), epsilon(1). F(0) has three main subunits: a(1), b(2) and c(10-14). The alpha and beta chains form an alternating ring which encloses part of the gamma chain. F(1) is attached to F(0) by a central stalk formed by the gamma and epsilon chains, while a peripheral stalk is formed by the delta and b chains.

It is found in the cell inner membrane. Functionally, f(1)F(0) ATP synthase produces ATP from ADP in the presence of a proton or sodium gradient. F-type ATPases consist of two structural domains, F(1) containing the extramembraneous catalytic core and F(0) containing the membrane proton channel, linked together by a central stalk and a peripheral stalk. During catalysis, ATP synthesis in the catalytic domain of F(1) is coupled via a rotary mechanism of the central stalk subunits to proton translocation. Key component of the F(0) channel; it plays a direct role in translocation across the membrane. A homomeric c-ring of between 10-14 subunits forms the central stalk rotor element with the F(1) delta and epsilon subunits. This Campylobacter jejuni subsp. doylei (strain ATCC BAA-1458 / RM4099 / 269.97) protein is ATP synthase subunit c.